We begin with the raw amino-acid sequence, 538 residues long: MEIKEISVPQQGVVADYMNGKKEIQSCFDYMLTEDAFKQRVQDLREREFFRQDLVTHLLEYNTKLQAGEATIQNVKALGDENTYVVIAGQQAGLLTGPLYTIHKIISVLQLAKEKEESLGVKVVPVFWIAGEDHDMDEINHTFVTKNKKIKKTIFHDRNPKKASASESELSLEDCRKWIEEIFKTYPETNFTKDVLQFVDDSLRKSNTYVDFFGHLIMKMFVNSGLILVDSHHPELRKLEVPFFKQIVSKYKEVQEGLHNQQEVIKELGYKPIIETKSNAVHIFMEIDNERVLLEDNQGKFVGKDGTYSFSYEELIEEMERSPERFSNNVVTRPLMQEYVFPTLAFIGGPGELAYWSELQQVFHTIGFRMPPVVPRITITYIERDIATDLHDLQLQERDPFLNNVDKLRENWLSNQIEEPIDDRFVEAKKEIMNIHTSLQQFVKEIDPGLSAFAGKNEFKINEQIELLERMLKRNVEKKHEVELNKFRRIQFALRPLGAPQERVWNVCYYLNQFGLDFVDHVMEKTFSWNGKHHVIKL.

Residues 460–484 adopt a coiled-coil conformation; the sequence is KINEQIELLERMLKRNVEKKHEVEL.

It belongs to the BshC family.

Involved in bacillithiol (BSH) biosynthesis. May catalyze the last step of the pathway, the addition of cysteine to glucosamine malate (GlcN-Mal) to generate BSH. This chain is Putative cysteine ligase BshC, found in Bacillus thuringiensis (strain Al Hakam).